A 280-amino-acid chain; its full sequence is Protein YibA (280 aa).

The chain is Protein YibA (yibA) from Escherichia coli O157:H7.